Here is a 296-residue protein sequence, read N- to C-terminus: Homoserine kinase (296 aa).

84–94 (PLARGLGSSSS) is an ATP binding site.

This sequence belongs to the GHMP kinase family. Homoserine kinase subfamily.

The protein localises to the cytoplasm. The enzyme catalyses L-homoserine + ATP = O-phospho-L-homoserine + ADP + H(+). Its pathway is amino-acid biosynthesis; L-threonine biosynthesis; L-threonine from L-aspartate: step 4/5. Catalyzes the ATP-dependent phosphorylation of L-homoserine to L-homoserine phosphate. The sequence is that of Homoserine kinase from Lactococcus lactis subsp. lactis (strain IL1403) (Streptococcus lactis).